The chain runs to 80 residues: uncharacterized protein (80 aa).

This is an uncharacterized protein from Acidianus filamentous virus 1 (isolate United States/Yellowstone) (AFV-1).